The following is a 281-amino-acid chain: Digeranylgeranylglyceryl phosphate synthase (281 aa).

Helical transmembrane passes span 88–108 (IALS…EFLI), 132–152 (ALVS…AGNL), 200–220 (GILV…PVIF), 225–245 (IIYL…ASAI), and 261–281 (LIKV…FRVV).

It belongs to the UbiA prenyltransferase family. DGGGP synthase subfamily. It depends on Mg(2+) as a cofactor.

It localises to the cell membrane. It catalyses the reaction sn-3-O-(geranylgeranyl)glycerol 1-phosphate + (2E,6E,10E)-geranylgeranyl diphosphate = 2,3-bis-O-(geranylgeranyl)-sn-glycerol 1-phosphate + diphosphate. The protein operates within membrane lipid metabolism; glycerophospholipid metabolism. In terms of biological role, prenyltransferase that catalyzes the transfer of the geranylgeranyl moiety of geranylgeranyl diphosphate (GGPP) to the C2 hydroxyl of (S)-3-O-geranylgeranylglyceryl phosphate (GGGP). This reaction is the second ether-bond-formation step in the biosynthesis of archaeal membrane lipids. The chain is Digeranylgeranylglyceryl phosphate synthase from Korarchaeum cryptofilum (strain OPF8).